Consider the following 337-residue polypeptide: Viral cathepsin (337 aa).

The signal sequence occupies residues 1–19 (MTLLMIFTILLVASSQIEG). Positions 20-126 (HLKFDIHDAQ…DAPPDVHDEL (107 aa)) are cleaved as a propeptide — activation peptide. 3 disulfides stabilise this stretch: Cys-147–Cys-188, Cys-181–Cys-221, and Cys-276–Cys-324. Residue Cys-150 is part of the active site. A glycan (N-linked (GlcNAc...) asparagine; by host) is linked at Asn-172. Active-site residues include His-283 and Asn-303.

Belongs to the peptidase C1 family. Post-translationally, synthesized as an inactive proenzyme and activated by proteolytic removal of the inhibitory propeptide.

It carries out the reaction Endopeptidase of broad specificity, hydrolyzing substrates of both cathepsin L and cathepsin B.. Its function is as follows. Cysteine protease that plays an essential role in host liquefaction to facilitate horizontal transmission of the virus. May participate in the degradation of foreign protein expressed by the baculovirus system. In Adoxophyes honmai (Smaller tea tortrix moth), this protein is Viral cathepsin (VCATH).